We begin with the raw amino-acid sequence, 307 residues long: MRIIFAGTPDFAVPSLRAAAQRHEVVAVYTQPDRPAGRGRGLTPSPVKLEAIARGIPVFQPQTLRSPEALATLRALDADLMVVVAYGLILPKAVLAAPTHGCWNVHASLLPRWRGAAPIQRAIEAGDTETGVCLMQMEAGLDTGPVLLSQRIEIGEQDTGGQLHDRLAALGAQVLSDGLGLLRAGIRPVAQPQPADGVTYAHKLDKAQARLDWAQPAQELARRVRAFNPWPVAEAILAGERVRLHGAVALELAHQQPPGTLLAASKQGIDIACGEGALRVRVLQREGGKAITAADYLNARRDLPALR.

108–111 (SLLP) lines the (6S)-5,6,7,8-tetrahydrofolate pocket.

Belongs to the Fmt family.

It catalyses the reaction L-methionyl-tRNA(fMet) + (6R)-10-formyltetrahydrofolate = N-formyl-L-methionyl-tRNA(fMet) + (6S)-5,6,7,8-tetrahydrofolate + H(+). Its function is as follows. Attaches a formyl group to the free amino group of methionyl-tRNA(fMet). The formyl group appears to play a dual role in the initiator identity of N-formylmethionyl-tRNA by promoting its recognition by IF2 and preventing the misappropriation of this tRNA by the elongation apparatus. The protein is Methionyl-tRNA formyltransferase of Xanthomonas axonopodis pv. citri (strain 306).